A 209-amino-acid chain; its full sequence is Large ribosomal subunit protein uL4 (209 aa).

The disordered stretch occupies residues 50 to 89 (MTKTKGLVSGGGKKPFKQKGTGGARQGSSRSILMPGGGTA).

The protein belongs to the universal ribosomal protein uL4 family. As to quaternary structure, part of the 50S ribosomal subunit.

Functionally, one of the primary rRNA binding proteins, this protein initially binds near the 5'-end of the 23S rRNA. It is important during the early stages of 50S assembly. It makes multiple contacts with different domains of the 23S rRNA in the assembled 50S subunit and ribosome. Its function is as follows. Forms part of the polypeptide exit tunnel. In Bdellovibrio bacteriovorus (strain ATCC 15356 / DSM 50701 / NCIMB 9529 / HD100), this protein is Large ribosomal subunit protein uL4.